The chain runs to 568 residues: Urease subunit alpha (568 aa).

The region spanning 130 to 568 (GGIDTHIHFI…LPMAQRYFLF (439 aa)) is the Urease domain. Ni(2+) is bound by residues histidine 135, histidine 137, and lysine 218. Position 218 is an N6-carboxylysine (lysine 218). Histidine 220 contacts substrate. The Ni(2+) site is built by histidine 247 and histidine 273. Histidine 321 acts as the Proton donor in catalysis. Residue aspartate 361 participates in Ni(2+) binding.

Belongs to the metallo-dependent hydrolases superfamily. Urease alpha subunit family. In terms of assembly, heterotrimer of UreA (gamma), UreB (beta) and UreC (alpha) subunits. Three heterotrimers associate to form the active enzyme. Ni cation serves as cofactor. Post-translationally, carboxylation allows a single lysine to coordinate two nickel ions.

It localises to the cytoplasm. The catalysed reaction is urea + 2 H2O + H(+) = hydrogencarbonate + 2 NH4(+). It participates in nitrogen metabolism; urea degradation; CO(2) and NH(3) from urea (urease route): step 1/1. This is Urease subunit alpha from Burkholderia cenocepacia (strain ATCC BAA-245 / DSM 16553 / LMG 16656 / NCTC 13227 / J2315 / CF5610) (Burkholderia cepacia (strain J2315)).